We begin with the raw amino-acid sequence, 202 residues long: Small ribosomal subunit protein uS4c (202 aa).

The segment at 18-45 is disordered; that stretch reads LPGLTRKMAKRKSPPGQHGAASKKPSQY. Residues 90-152 enclose the S4 RNA-binding domain; that stretch reads MRLDTTIFRL…SRSRKLIEGY (63 aa).

The protein belongs to the universal ribosomal protein uS4 family. In terms of assembly, part of the 30S ribosomal subunit. Contacts protein S5. The interaction surface between S4 and S5 is involved in control of translational fidelity.

The protein localises to the plastid. It is found in the chloroplast. Its function is as follows. One of the primary rRNA binding proteins, it binds directly to 16S rRNA where it nucleates assembly of the body of the 30S subunit. In terms of biological role, with S5 and S12 plays an important role in translational accuracy. The chain is Small ribosomal subunit protein uS4c (rps4) from Nephroselmis olivacea (Green alga).